A 144-amino-acid polypeptide reads, in one-letter code: Large ribosomal subunit protein uL15 (144 aa).

A compositionally biased stretch (basic and acidic residues) spans 1 to 14; it reads MKLHELKPNEGARD. The disordered stretch occupies residues 1-43; it reads MKLHELKPNEGARDVRKRVGRGTSSGTGKTAGRGQKGQKARSK. Positions 23-35 are enriched in gly residues; sequence TSSGTGKTAGRGQ.

Belongs to the universal ribosomal protein uL15 family. As to quaternary structure, part of the 50S ribosomal subunit.

Binds to the 23S rRNA. The sequence is that of Large ribosomal subunit protein uL15 from Latilactobacillus sakei subsp. sakei (strain 23K) (Lactobacillus sakei subsp. sakei).